An 816-amino-acid chain; its full sequence is Larval serum protein 1 alpha chain (816 aa).

A signal peptide spans 1–16 (MKFAIAFLACVAVVTA).

It belongs to the hemocyanin family. In terms of assembly, heterohexamer, composed of three subunits, alpha, beta and gamma. As to expression, larval hemolymph.

It is found in the secreted. The protein resides in the extracellular space. Larval storage protein (LSP) which may serve as a store of amino acids for synthesis of adult proteins. This chain is Larval serum protein 1 alpha chain (Lsp1alpha), found in Drosophila melanogaster (Fruit fly).